We begin with the raw amino-acid sequence, 188 residues long: V-type proton ATPase subunit E (188 aa).

The protein belongs to the V-ATPase E subunit family.

In terms of biological role, produces ATP from ADP in the presence of a proton gradient across the membrane. The protein is V-type proton ATPase subunit E of Dictyoglomus turgidum (strain DSM 6724 / Z-1310).